The primary structure comprises 262 residues: ATP synthase subunit a (262 aa).

The next 6 membrane-spanning stretches (helical) occupy residues 24 to 44 (AVHL…LFVF), 84 to 104 (VIAP…AIDL), 129 to 149 (DISA…FYTV), 165 to 185 (PFNH…TLLA), 194 to 214 (LFGN…MYMA), and 228 to 248 (LVWA…FMML).

It belongs to the ATPase A chain family. In terms of assembly, F-type ATPases have 2 components, CF(1) - the catalytic core - and CF(0) - the membrane proton channel. CF(1) has five subunits: alpha(3), beta(3), gamma(1), delta(1), epsilon(1). CF(0) has three main subunits: a(1), b(2) and c(9-12). The alpha and beta chains form an alternating ring which encloses part of the gamma chain. CF(1) is attached to CF(0) by a central stalk formed by the gamma and epsilon chains, while a peripheral stalk is formed by the delta and b chains.

The protein localises to the cell inner membrane. Key component of the proton channel; it plays a direct role in the translocation of protons across the membrane. The polypeptide is ATP synthase subunit a (Actinobacillus pleuropneumoniae serotype 7 (strain AP76)).